The sequence spans 183 residues: (2E)-enoyl-[ACP] glycyltransferase (183 aa).

It belongs to the FcoT family.

It catalyses the reaction a (3R)-3-[(carboxymethyl)amino]fatty acid + holo-[ACP] + H(+) = a (2E)-enoyl-[ACP] + glycine + H2O. It carries out the reaction (3R)-3-[(carboxylmethyl)amino]decanoate + holo-[ACP] + H(+) = (2E)-decenoyl-[ACP] + glycine + H2O. The enzyme catalyses a fatty acyl-CoA + H2O = a fatty acid + CoA + H(+). Involved in the biosynthesis of a unique class of isonitrile lipopeptides (INLPs) that seem to play a role in metal acquisition. Catalyzes a Michael addition of glycine to the beta-position of an alpha,beta-unsaturated fatty acyl-[ACP], producing a (3R)-3-[(carboxymethyl)amino]fatty acid. Acts on the (2E)-decenoyl moiety loaded on the acyl-carrier protein (ACP) BQ2027_MB0103, forming the product (3R)-3-[(carboxymethyl)amino]decanoate released from the ACP. Displays thioesterase activity with a preference for long chain fatty acyl groups. This Mycobacterium bovis (strain ATCC BAA-935 / AF2122/97) protein is (2E)-enoyl-[ACP] glycyltransferase.